We begin with the raw amino-acid sequence, 490 residues long: UDP-N-acetylmuramoyl-L-alanyl-D-glutamate--2,6-diaminopimelate ligase (490 aa).

Ser-31 provides a ligand contact to UDP-N-acetyl-alpha-D-muramoyl-L-alanyl-D-glutamate. 109–115 (GTNGKTS) lines the ATP pocket. UDP-N-acetyl-alpha-D-muramoyl-L-alanyl-D-glutamate is bound by residues Asn-150, 151-152 (TT), Ser-178, and Arg-186. An N6-carboxylysine modification is found at Lys-218. Residues Arg-384, 408–411 (DNPR), Gly-458, and Glu-462 contribute to the meso-2,6-diaminopimelate site. The Meso-diaminopimelate recognition motif motif lies at 408–411 (DNPR).

The protein belongs to the MurCDEF family. MurE subfamily. Mg(2+) serves as cofactor. In terms of processing, carboxylation is probably crucial for Mg(2+) binding and, consequently, for the gamma-phosphate positioning of ATP.

It is found in the cytoplasm. It carries out the reaction UDP-N-acetyl-alpha-D-muramoyl-L-alanyl-D-glutamate + meso-2,6-diaminopimelate + ATP = UDP-N-acetyl-alpha-D-muramoyl-L-alanyl-gamma-D-glutamyl-meso-2,6-diaminopimelate + ADP + phosphate + H(+). It functions in the pathway cell wall biogenesis; peptidoglycan biosynthesis. Catalyzes the addition of meso-diaminopimelic acid to the nucleotide precursor UDP-N-acetylmuramoyl-L-alanyl-D-glutamate (UMAG) in the biosynthesis of bacterial cell-wall peptidoglycan. The chain is UDP-N-acetylmuramoyl-L-alanyl-D-glutamate--2,6-diaminopimelate ligase from Bacillus velezensis (strain DSM 23117 / BGSC 10A6 / LMG 26770 / FZB42) (Bacillus amyloliquefaciens subsp. plantarum).